The sequence spans 194 residues: uncharacterized protein (194 aa).

This sequence belongs to the mimivirus R457/R459 family.

Its subcellular location is the virion. This is an uncharacterized protein from Acanthamoeba polyphaga mimivirus (APMV).